A 338-amino-acid polypeptide reads, in one-letter code: Phenylalanine--tRNA ligase alpha subunit (338 aa).

A Mg(2+)-binding site is contributed by Glu-252.

This sequence belongs to the class-II aminoacyl-tRNA synthetase family. Phe-tRNA synthetase alpha subunit type 1 subfamily. In terms of assembly, tetramer of two alpha and two beta subunits. Mg(2+) serves as cofactor.

Its subcellular location is the cytoplasm. It catalyses the reaction tRNA(Phe) + L-phenylalanine + ATP = L-phenylalanyl-tRNA(Phe) + AMP + diphosphate + H(+). The protein is Phenylalanine--tRNA ligase alpha subunit of Pseudomonas paraeruginosa (strain DSM 24068 / PA7) (Pseudomonas aeruginosa (strain PA7)).